The sequence spans 160 residues: Endoribonuclease YbeY (160 aa).

3 residues coordinate Zn(2+): H127, H131, and H137.

This sequence belongs to the endoribonuclease YbeY family. Zn(2+) serves as cofactor.

The protein localises to the cytoplasm. Its function is as follows. Single strand-specific metallo-endoribonuclease involved in late-stage 70S ribosome quality control and in maturation of the 3' terminus of the 16S rRNA. This is Endoribonuclease YbeY from Synechococcus sp. (strain RCC307).